A 572-amino-acid chain; its full sequence is Urease subunit alpha (572 aa).

Positions 134 to 572 constitute a Urease domain; sequence GGIDAHVHFI…LPMAQRYFLF (439 aa). Ni(2+) is bound by residues histidine 139, histidine 141, and lysine 222. Lysine 222 carries the N6-carboxylysine modification. Histidine 224 contacts substrate. Ni(2+)-binding residues include histidine 251 and histidine 277. The active-site Proton donor is the histidine 325. Aspartate 365 provides a ligand contact to Ni(2+).

It belongs to the metallo-dependent hydrolases superfamily. Urease alpha subunit family. As to quaternary structure, heterotrimer of UreA (gamma), UreB (beta) and UreC (alpha) subunits. Three heterotrimers associate to form the active enzyme. Requires Ni cation as cofactor. In terms of processing, carboxylation allows a single lysine to coordinate two nickel ions.

The protein localises to the cytoplasm. It catalyses the reaction urea + 2 H2O + H(+) = hydrogencarbonate + 2 NH4(+). The protein operates within nitrogen metabolism; urea degradation; CO(2) and NH(3) from urea (urease route): step 1/1. The polypeptide is Urease subunit alpha (Synechococcus sp. (strain JA-2-3B'a(2-13)) (Cyanobacteria bacterium Yellowstone B-Prime)).